The sequence spans 249 residues: Methylthioribulose-1-phosphate dehydratase (249 aa).

The tract at residues 1–25 (MVDIKPEQTQEGNNNDHLVQSDDPE) is disordered. Polar residues predominate over residues 9–18 (TQEGNNNDHL). C105 provides a ligand contact to substrate. Zn(2+) contacts are provided by H122 and H124. E151 functions as the Proton donor/acceptor in the catalytic mechanism. H207 contacts Zn(2+).

This sequence belongs to the aldolase class II family. MtnB subfamily. Zn(2+) serves as cofactor.

The protein resides in the cytoplasm. The enzyme catalyses 5-(methylsulfanyl)-D-ribulose 1-phosphate = 5-methylsulfanyl-2,3-dioxopentyl phosphate + H2O. The protein operates within amino-acid biosynthesis; L-methionine biosynthesis via salvage pathway; L-methionine from S-methyl-5-thio-alpha-D-ribose 1-phosphate: step 2/6. In terms of biological role, catalyzes the dehydration of methylthioribulose-1-phosphate (MTRu-1-P) into 2,3-diketo-5-methylthiopentyl-1-phosphate (DK-MTP-1-P). This is Methylthioribulose-1-phosphate dehydratase from Arthroderma otae (strain ATCC MYA-4605 / CBS 113480) (Microsporum canis).